The primary structure comprises 185 residues: MGQCLRYQMQWEDLEEYQALTFLTRNEILCIHDTFLKLCPSGKHYKEATLTMDQVSSLPALRVNPFRDRICRVFSHDNVFSFEDVLGMASVFSEQACPSLKIEYAFRIYDFNENGFIDEEDLEEIVLRLLKSDDASEDLLMDVMHHVLSESDLDNDSMLSFSEFEHAMAKSPDFMNSFRIHFWGC.

EF-hand domains lie at 62-95 (RVNPFRDRICRVFSHDNVFSFEDVLGMASVFSEQ), 97-132 (CPSLKIEYAFRIYDFNENGFIDEEDLEEIVLRLLKS), and 138-174 (DLLMDVMHHVLSESDLDNDSMLSFSEFEHAMAKSPDF). 4 residues coordinate Ca(2+): Asp-110, Asn-112, Asn-114, and Asp-121.

As to quaternary structure, interacts with ITGA2B (via C-terminus cytoplasmic tail region); the interaction is stabilized/increased in a calcium- and magnesium-dependent manner. As to expression, expressed weakly in megakaryocytes and endothelial cells.

This Mus musculus (Mouse) protein is Calcium and integrin-binding family member 4 (Cib4).